The chain runs to 422 residues: O-methyltransferase kk1A (422 aa).

An S-adenosyl-L-methionine-binding site is contributed by D277. H320 acts as the Proton acceptor in catalysis.

The protein belongs to the class I-like SAM-binding methyltransferase superfamily. Cation-independent O-methyltransferase family.

Its pathway is secondary metabolite biosynthesis. O-methyltransferase; part of the gene cluster that mediates the biosynthesis of KK-1, a novel cyclic depsipeptide with 10 residues which is a promising active compound with high activity against many plant pathogens, especially Botrytis cinerea. Within the pathway, kk1A is responsible for the O-methylation of tyrosine as a free amino acid before its activation as an aminoacyl-AMP by the corresponding A domain of kk1B. The nonribosomal peptide synthetase (NRPS) kk1B catalyzes the elongation and cyclization of the decapeptide chain composed of 1 D-lactic acid residue (D-Lac), 1 pipecolic acid residue (Pip), 1 aspartic acid residue (Asp), 1 isoleucine residue (Ile), 1 glycine residue (Gly), 1 tyrosine residue (Tyr) and 4 valine residues (Val). The Asp, Ile and 3 Val residues are N-methylated by the 5 methyltransferase domains from the NRPS (found in modules 3, 5, 6, 7 and 9), whereas the Tyr residue is O-methylated by the cluster encoded O-methyltransferase kk1A. The thioesterase kk1J is likely to be involved in the corrective mechanism of peptide chain synthesis. The D-lactate dehydrogenase kk1H is involved in the synthesis of D-lactic acid from pyruvic acid, which is recognized by the A domain of the first kk1B module. The pyrroline-5-carboxylate reductase kk1I is involved in the synthesis of the L-pipecolic acid residue of KK-1 from delta-1-pyrroline-5-carboxylate (P5C), a metabolic intermediate of lysine. It is still unclear how kk1C and kk1D are involved in the production of KK-1. The protein is O-methyltransferase kk1A of Curvularia clavata.